The primary structure comprises 403 residues: Phosphoglycerate kinase (403 aa).

Residues 21–23, R36, 59–62, R119, and R154 contribute to the substrate site; these read DFN and HLGR. ATP contacts are provided by residues K207, G299, E330, and 357–360; that span reads GGDA.

Belongs to the phosphoglycerate kinase family. As to quaternary structure, monomer.

The protein localises to the cytoplasm. The catalysed reaction is (2R)-3-phosphoglycerate + ATP = (2R)-3-phospho-glyceroyl phosphate + ADP. The protein operates within carbohydrate degradation; glycolysis; pyruvate from D-glyceraldehyde 3-phosphate: step 2/5. The polypeptide is Phosphoglycerate kinase (pgk) (Chlamydia muridarum (strain MoPn / Nigg)).